Reading from the N-terminus, the 264-residue chain is Octanoyltransferase (264 aa).

In terms of domain architecture, BPL/LPL catalytic spans 74 to 262; sequence GTASELVWLV…AFESVFGPRQ (189 aa). Substrate is bound by residues 113 to 120, 193 to 195, and 206 to 208; these read RGGEYTYH, AIG, and GIA. The active-site Acyl-thioester intermediate is the cysteine 224.

It belongs to the LipB family.

It is found in the cytoplasm. It catalyses the reaction octanoyl-[ACP] + L-lysyl-[protein] = N(6)-octanoyl-L-lysyl-[protein] + holo-[ACP] + H(+). It participates in protein modification; protein lipoylation via endogenous pathway; protein N(6)-(lipoyl)lysine from octanoyl-[acyl-carrier-protein]: step 1/2. In terms of biological role, catalyzes the transfer of endogenously produced octanoic acid from octanoyl-acyl-carrier-protein onto the lipoyl domains of lipoate-dependent enzymes. Lipoyl-ACP can also act as a substrate although octanoyl-ACP is likely to be the physiological substrate. The polypeptide is Octanoyltransferase (Brucella melitensis biotype 1 (strain ATCC 23456 / CCUG 17765 / NCTC 10094 / 16M)).